We begin with the raw amino-acid sequence, 419 residues long: Gamma-glutamyl phosphate reductase (419 aa).

It belongs to the gamma-glutamyl phosphate reductase family.

It localises to the cytoplasm. The enzyme catalyses L-glutamate 5-semialdehyde + phosphate + NADP(+) = L-glutamyl 5-phosphate + NADPH + H(+). The protein operates within amino-acid biosynthesis; L-proline biosynthesis; L-glutamate 5-semialdehyde from L-glutamate: step 2/2. In terms of biological role, catalyzes the NADPH-dependent reduction of L-glutamate 5-phosphate into L-glutamate 5-semialdehyde and phosphate. The product spontaneously undergoes cyclization to form 1-pyrroline-5-carboxylate. This chain is Gamma-glutamyl phosphate reductase, found in Yersinia pestis.